Here is a 784-residue protein sequence, read N- to C-terminus: MPKTSSAKPGRLSSKFWKLLGASTERNQARSLSEVKGAADFEKKAADLDDEQLTKAAKLLKLEDLAGASDITQFLAIAREAAERTTGLRPFDVQLLAALRMLAGDVVEMATGEGKTLAGAIAAAGYALGGRRVHVITINDYLARRDAEWMGPLLKALGLTVGWITADSTADERREAYQCDVTYASVNEIGFDVLRDQLVTDVADLVSPNPDVALIDEADSVLVDEALVPLVLAGTSHREQPRVEIIRMVGELEAGKHYDTDAESRNVHLTEAGARVMEAKLGGIDLYSEEHVGTTLTEINVALHAHVLLQRDVHYIVRDDAVHLINASRGRIASLQRWPDGLQAAVEAKEGIETTETGEVLDTITVQALINRYPRVCGMTGTALAAGEQLRQFYKLGVSPIPPNTPNIRKDEPDRVYITAAAKIDAIVEHIAEVHKTGQPVLVGTHDVAESEELHEKLLKAGVPAVVLNAKNDAEEAAVIAEAGKLGAVTVSTQMAGRGTDIRLGGSDVGDDDAEKKKVAELGGLHVVGTGRHHTERLDNQLRGRAGRQGDPGSSVFFSSWEDDVVAAHLERSKLPMETDPDAGDGRIIAPRAASLLDHAQRVAEGRLLDVHANTWRYNQLIAQQRAIIVERRETLLRTDTAREELKERSPERYAKLAEELGEDAEERLEKICRLIMLYHLDRGWCEHLAFLADIRESIHLRALGRQNPLDEFHRMAVDAFASLAADAIEAAQQTFETAESVADEPGVDLSKLARPTSTWTYMVHDNPLADDTMSALSLPGVFR.

Residues glutamine 94, 112 to 116, and aspartate 501 contribute to the ATP site; that span reads GEGKT.

The protein belongs to the SecA family. In terms of assembly, monomer and homodimer. Part of the essential Sec protein translocation apparatus which comprises SecA, SecYEG and auxiliary proteins SecDF. Other proteins may also be involved.

The protein resides in the cell membrane. Its subcellular location is the cytoplasm. The enzyme catalyses ATP + H2O + cellular proteinSide 1 = ADP + phosphate + cellular proteinSide 2.. Part of the Sec protein translocase complex. Interacts with the SecYEG preprotein conducting channel. Has a central role in coupling the hydrolysis of ATP to the transfer of proteins into and across the cell membrane, serving as an ATP-driven molecular motor driving the stepwise translocation of polypeptide chains across the membrane. The chain is Protein translocase subunit SecA 2 from Mycolicibacterium smegmatis (strain ATCC 700084 / mc(2)155) (Mycobacterium smegmatis).